Consider the following 340-residue polypeptide: Entry-fusion complex protein OPG094 (340 aa).

A disordered region spans residues 1 to 20 (MGGGVSVELPKRDPPPGVPT). The N-myristoyl glycine; by host moiety is linked to residue G2. Topologically, residues 2 to 319 (GGGVSVELPK…VQHNIKHSFD (318 aa)) are virion surface. Residues 320 to 340 (LKLHLISLLSLLVIWILIVAI) traverse the membrane as a helical; Signal-anchor for type II membrane protein segment.

This sequence belongs to the orthopoxvirus OPG086 family. As to quaternary structure, interacts with OPG143. Component of the entry fusion complex (EFC) composed of OPG053, OPG076, OPG086, OPG094, OPG095, OPG099, OPG107, OPG143, OPG104, OPG147 and OPG155. Except for OPG095 and OPG053, each of the EFC proteins is required for assembly or stability of the complex. Unglycosylated because produced in viral factories instead of the classic ER -Golgi route.

It localises to the virion membrane. Its function is as follows. Component of the entry fusion complex (EFC), which consists of 11 proteins. During cell infection, this complex mediates entry of the virion core into the host cytoplasm by a two-step mechanism consisting of lipid mixing of the viral and cellular membranes and subsequent pore formation. The chain is Entry-fusion complex protein OPG094 (OPG094) from Homo sapiens (Human).